We begin with the raw amino-acid sequence, 358 residues long: Secreted protein RBT4 (358 aa).

An N-terminal signal peptide occupies residues 1–19 (MKFSQVATTAAIFAGLTTA). Composition is skewed to low complexity over residues 48 to 63 (VTGGDQGQDQVQQSAA), 153 to 174 (TTEVSAEASPSAVTTSSAVATP), and 189 to 200 (AATTASGSSSGS). 2 disordered regions span residues 48–98 (VTGG…DGGN) and 144–203 (GFPS…SNDF). The SCP domain maps to 216–332 (LDAHNKKRAR…NWGLYVVCSY (117 aa)).

It belongs to the CRISP family.

The protein resides in the secreted. In terms of biological role, secreted protein that acts as a virulence factor during infections such as in posttraumatic corneal infections. Acts as an important antigen in patients with systemic candidiasis and plays a role in the protection against phagocyte attack. This is Secreted protein RBT4 (RBT4) from Candida albicans (strain SC5314 / ATCC MYA-2876) (Yeast).